We begin with the raw amino-acid sequence, 521 residues long: GSPVFIAFRSSTKKSVQYDDVPEYKDRLNLSENYTLSISNARISDEKRFVCMLVTEDDVFEAPTVVKVFKQPSKPEIVSKAPFLETEQLQKLGDCISRDSYPEGNITWYRNGKVLQPLEGAVVIIFKKQMDPVTQLYTMTSSLEYKTTKADIQTPFTCSITYYGPSGQKTVHSEQAVFDIYYPTEQVTIQVLPPKNAIKEGDNITLKCLGNGNPPPEEFFFYLPGQPEGIRSSNTYTLPNVRRNATGNYKCSLIDKKSLIASTAITVHYLDLSLNPXGELTKQIGDSLPVSCTISAIRNATVVWMKDNIKLRSSPSFSSLQYQDAGNYVCETALQEVEGLKKRESLTLIVEVKPQIKMTKKTDPSGLSKTIICHVEGFPKPAIQWTITGSGSVINQTEESPYINGRYYSKIIISPEENVTLTCAAENQLERTVNSLNVSAISIPEHDEADEISDENREKVNDQAKLIVGIVVGLLLAALVAGVVYWLYMKKSKTASKHVNKDLGNMEENKKLEENNHKTEA.

Over 1 to 465 the chain is Extracellular; that stretch reads GSPVFIAFRS…NREKVNDQAK (465 aa). 9 N-linked (GlcNAc...) asparagine glycosylation sites follow: N29, N33, N105, N203, N244, N299, N395, N418, and N437. In terms of domain architecture, Ig-like V-type 2 spans 63–172; the sequence is PTVVKVFKQP…YGPSGQKTVH (110 aa). Cysteines 95 and 158 form a disulfide. Ig-like C2-type domains lie at 183-266, 271-347, and 354-439; these read PTEQ…TAIT, DLSL…ESLT, and PQIK…LNVS. 3 disulfide bridges follow: C208-C251, C292-C330, and C373-C423. Residues 466 to 487 form a helical membrane-spanning segment; that stretch reads LIVGIVVGLLLAALVAGVVYWL. At 488–521 the chain is on the cytoplasmic side; it reads YMKKSKTASKHVNKDLGNMEENKKLEENNHKTEA. A disordered region spans residues 500–521; it reads NKDLGNMEENKKLEENNHKTEA. Residues 507–521 show a composition bias toward basic and acidic residues; sequence EENKKLEENNHKTEA.

As to quaternary structure, homodimer. Interacts (via extracellular domain) with CD6 (via extracellular domain). Homodimerization and interaction with CD6 involve the same region and cannot occur simultaneously. The affinity for CD6 is much higher than the affinity for self-association. Interacts (via glycosylated extracellular domain) with LGALS1 and LGALS3. Interaction with LGALS1 or LGALS3 inhibits interaction with CD6. Glycosylated.

Its subcellular location is the cell membrane. The protein localises to the cell projection. It is found in the axon. It localises to the dendrite. Cell adhesion molecule that mediates both heterotypic cell-cell contacts via its interaction with CD6, as well as homotypic cell-cell contacts. Promotes T-cell activation and proliferation via its interactions with CD6. Contributes to the formation and maturation of the immunological synapse via its interactions with CD6. Mediates homotypic interactions with cells that express ALCAM. Mediates attachment of dendritic cells onto endothelial cells via homotypic interaction. Inhibits endothelial cell migration and promotes endothelial tube formation via homotypic interactions. Required for normal organization of the lymph vessel network. Required for normal hematopoietic stem cell engraftment in the bone marrow. Plays a role in hematopoiesis; required for normal numbers of hematopoietic stem cells in bone marrow. Promotes in vitro osteoblast proliferation and differentiation. Promotes neurite extension, axon growth and axon guidance; axons grow preferentially on surfaces that contain ALCAM. Mediates outgrowth and pathfinding for retinal ganglion cell axons. This chain is CD166 antigen (ALCAM), found in Oryctolagus cuniculus (Rabbit).